A 119-amino-acid polypeptide reads, in one-letter code: Beta-2-microglobulin (119 aa).

Positions 1 to 20 are cleaved as a signal peptide; that stretch reads MARFVVVALLVLLSVSDLEA. One can recognise an Ig-like C1-type domain in the interval 25–114; it reads PKIQVYSRYP…VTFLTPKTVK (90 aa). Cys-45 and Cys-100 are joined by a disulfide.

The protein belongs to the beta-2-microglobulin family. In terms of assembly, heterodimer of an alpha chain and a beta chain. Beta-2-microglobulin is the beta-chain of major histocompatibility complex class I molecules.

The protein localises to the secreted. Its function is as follows. Component of the class I major histocompatibility complex (MHC). Involved in the presentation of peptide antigens to the immune system. This chain is Beta-2-microglobulin (B2M), found in Leontocebus fuscicollis (Brown-mantled tamarin).